Consider the following 79-residue polypeptide: Morintide mO1 (79 aa).

The N-terminal stretch at 1 to 20 (MAKLSFLSLFLLCLVATATA) is a signal peptide. The Chitin-binding type-1 domain maps to 21–63 (QNCGRQAGNRACANQLCCSQYGFCGSTSEYCSRANGCQSNCRG). 4 disulfide bridges follow: Cys23–Cys38, Cys32–Cys44, Cys37–Cys51, and Cys57–Cys61. A propeptide spanning residues 64–79 (GGGADGAGGEAGGGGP) is cleaved from the precursor.

As to expression, leaves (at protein level).

Its function is as follows. Chitin-binding protein which functions in defense against chitin-containing fungal pathogens. Inhibits the growth of budding hyphae in A.alternata and A.brassiciola. This chain is Morintide mO1, found in Moringa oleifera (Horseradish tree).